Consider the following 237-residue polypeptide: Proteasome subunit beta type-1 (237 aa).

The protein belongs to the peptidase T1B family. The 26S proteasome consists of a 20S proteasome core and two 19S regulatory subunits. The 20S proteasome core is a barrel-shaped complex made of 28 subunits that are arranged in four stacked rings. The two outer rings are each formed by seven alpha subunits, and the two inner rings are formed by seven beta subunits. The proteolytic activity is exerted by three beta-subunits psmb5, psmb6 and psmb7.

The protein resides in the cytoplasm. It is found in the nucleus. Non-catalytic component of the 20S core proteasome complex involved in the proteolytic degradation of most intracellular proteins. This complex plays numerous essential roles within the cell by associating with different regulatory particles. Associated with two 19S regulatory particles, forms the 26S proteasome and thus participates in the ATP-dependent degradation of ubiquitinated proteins. The 26S proteasome plays a key role in the maintenance of protein homeostasis by removing misfolded or damaged proteins that could impair cellular functions, and by removing proteins whose functions are no longer required. Associated with the PA200 or PA28, the 20S proteasome mediates ubiquitin-independent protein degradation. The chain is Proteasome subunit beta type-1 from Danio rerio (Zebrafish).